Reading from the N-terminus, the 548-residue chain is Eukaryotic translation initiation factor 3 subunit D (548 aa).

At K53 the chain carries N6-acetyllysine. S161 is subject to Phosphoserine. The RNA gate stretch occupies residues 285-299; the sequence is DFDLPTVSETANEPP. 2 disordered regions span residues 288-309 and 523-548; these read LPTVSETANEPPQDEGNSFNSP and PDGTFSSDEDEEEEEEEEEEEEEEET. Positions 291–309 are enriched in polar residues; it reads VSETANEPPQDEGNSFNSP. 2 positions are modified to phosphoserine: S528 and S529. Residues 529–548 show a composition bias toward acidic residues; the sequence is SDEDEEEEEEEEEEEEEEET.

The protein belongs to the eIF-3 subunit D family. Component of the eukaryotic translation initiation factor 3 (eIF-3) complex, which is composed of 13 subunits: EIF3A, EIF3B, EIF3C, EIF3D, EIF3E, EIF3F, EIF3G, EIF3H, EIF3I, EIF3J, EIF3K, EIF3L and EIF3M. The eIF-3 complex appears to include 3 stable modules: module A is composed of EIF3A, EIF3B, EIF3G and EIF3I; module B is composed of EIF3F, EIF3H, and EIF3M; and module C is composed of EIF3C, EIF3D, EIF3E, EIF3K and EIF3L. EIF3C of module C binds EIF3B of module A and EIF3H of module B, thereby linking the three modules. EIF3J is a labile subunit that binds to the eIF-3 complex via EIF3B. The eIF-3 complex interacts with RPS6KB1 under conditions of nutrient depletion. Mitogenic stimulation leads to binding and activation of a complex composed of MTOR and RPTOR, leading to phosphorylation and release of RPS6KB1 and binding of EIF4B to eIF-3.

It localises to the cytoplasm. Functionally, mRNA cap-binding component of the eukaryotic translation initiation factor 3 (eIF-3) complex, a complex required for several steps in the initiation of protein synthesis of a specialized repertoire of mRNAs. The eIF-3 complex associates with the 40S ribosome and facilitates the recruitment of eIF-1, eIF-1A, eIF-2:GTP:methionyl-tRNAi and eIF-5 to form the 43S pre-initiation complex (43S PIC). The eIF-3 complex stimulates mRNA recruitment to the 43S PIC and scanning of the mRNA for AUG recognition. The eIF-3 complex is also required for disassembly and recycling of post-termination ribosomal complexes and subsequently prevents premature joining of the 40S and 60S ribosomal subunits prior to initiation. The eIF-3 complex specifically targets and initiates translation of a subset of mRNAs involved in cell proliferation, including cell cycling, differentiation and apoptosis, and uses different modes of RNA stem-loop binding to exert either translational activation or repression. In the eIF-3 complex, EIF3D specifically recognizes and binds the 7-methylguanosine cap of a subset of mRNAs. This chain is Eukaryotic translation initiation factor 3 subunit D, found in Pongo abelii (Sumatran orangutan).